The primary structure comprises 513 residues: Activin receptor type-2B (513 aa).

Positions 1-18 are cleaved as a signal peptide; it reads MTAPWAALALLWGSLCAG. At 19 to 137 the chain is on the extracellular side; it reads SGRGEAETRE…PPPTAPTLLT (119 aa). 5 disulfides stabilise this stretch: C29–C59, C49–C77, C84–C103, C90–C102, and C104–C109. N-linked (GlcNAc...) asparagine glycosylation is found at N42 and N65. Residues 138-158 traverse the membrane as a helical segment; that stretch reads VLAYSLLPIGGLSLIVLLAFW. Over 159–513 the chain is Cytoplasmic; the sequence is MYRHRKPPYG…VDLLPKESSI (355 aa). The Protein kinase domain maps to 190 to 481; the sequence is LQLLEIKARG…AGCVEERVSL (292 aa). ATP-binding positions include 196-204 and K217; that span reads KARGRFGCV. Residue D322 is the Proton acceptor of the active site. The segment at 492–513 is interaction with DYNLT1; sequence DCLVSLVTSVTNVDLLPKESSI.

Belongs to the protein kinase superfamily. TKL Ser/Thr protein kinase family. TGFB receptor subfamily. Forms an activin receptor complex with activin type II receptors such as ACVR1B. Interacts with VPS39. Interacts with DYNLT1. Interacts with BMP3. Interacts with BMP2. Mg(2+) serves as cofactor. Mn(2+) is required as a cofactor. In terms of processing, phosphorylated. Constitutive phosphorylation is in part catalyzed by its own kinase activity.

The protein localises to the cell membrane. It carries out the reaction L-threonyl-[receptor-protein] + ATP = O-phospho-L-threonyl-[receptor-protein] + ADP + H(+). The catalysed reaction is L-seryl-[receptor-protein] + ATP = O-phospho-L-seryl-[receptor-protein] + ADP + H(+). Transmembrane serine/threonine kinase activin type-2 receptor forming an activin receptor complex with activin type-1 serine/threonine kinase receptors (ACVR1, ACVR1B or ACVR1c). Transduces the activin signal from the cell surface to the cytoplasm and is thus regulating many physiological and pathological processes including neuronal differentiation and neuronal survival, hair follicle development and cycling, FSH production by the pituitary gland, wound healing, extracellular matrix production, immunosuppression and carcinogenesis. Activin is also thought to have a paracrine or autocrine role in follicular development in the ovary. Within the receptor complex, the type-2 receptors act as a primary activin receptors (binds activin-A/INHBA, activin-B/INHBB as well as inhibin-A/INHA-INHBA). The type-1 receptors like ACVR1B act as downstream transducers of activin signals. Activin binds to type-2 receptor at the plasma membrane and activates its serine-threonine kinase. The activated receptor type-2 then phosphorylates and activates the type-1 receptor. Once activated, the type-1 receptor binds and phosphorylates the SMAD proteins SMAD2 and SMAD3, on serine residues of the C-terminal tail. Soon after their association with the activin receptor and subsequent phosphorylation, SMAD2 and SMAD3 are released into the cytoplasm where they interact with the common partner SMAD4. This SMAD complex translocates into the nucleus where it mediates activin-induced transcription. Inhibitory SMAD7, which is recruited to ACVR1B through FKBP1A, can prevent the association of SMAD2 and SMAD3 with the activin receptor complex, thereby blocking the activin signal. Activin signal transduction is also antagonized by the binding to the receptor of inhibin-B via the IGSF1 inhibin coreceptor. The protein is Activin receptor type-2B (Acvr2b) of Rattus norvegicus (Rat).